The chain runs to 418 residues: Glutamyl-tRNA reductase (418 aa).

Substrate contacts are provided by residues 49–52, Ser107, 112–114, and Gln118; these read TCNR and EPQ. Cys50 acts as the Nucleophile in catalysis. Position 187-192 (187-192) interacts with NADP(+); the sequence is GAGETI.

Belongs to the glutamyl-tRNA reductase family. In terms of assembly, homodimer.

The enzyme catalyses (S)-4-amino-5-oxopentanoate + tRNA(Glu) + NADP(+) = L-glutamyl-tRNA(Glu) + NADPH + H(+). It participates in porphyrin-containing compound metabolism; protoporphyrin-IX biosynthesis; 5-aminolevulinate from L-glutamyl-tRNA(Glu): step 1/2. Functionally, catalyzes the NADPH-dependent reduction of glutamyl-tRNA(Glu) to glutamate 1-semialdehyde (GSA). In Aeromonas salmonicida (strain A449), this protein is Glutamyl-tRNA reductase.